Here is a 68-residue protein sequence, read N- to C-terminus: MDARLLEILVCPVCKGPLHYDRGAQELVCNADKLAYPIRDGIPVMLVDEARQTVEGTPVDPAGPAQGR.

The protein belongs to the UPF0434 family.

This is UPF0434 protein BTH_I0741 from Burkholderia thailandensis (strain ATCC 700388 / DSM 13276 / CCUG 48851 / CIP 106301 / E264).